Here is a 425-residue protein sequence, read N- to C-terminus: Receptor-like protein 55 (425 aa).

The N-terminal stretch at 1–25 (MKPQQPQPPLLLLLLLPLLLTTVSS) is a signal peptide. The Extracellular portion of the chain corresponds to 26-397 (YPLNPKQLKA…EEEHKGSNKT (372 aa)). N-linked (GlcNAc...) asparagine glycosylation is found at Asn-40, Asn-54, Asn-79, and Asn-132. LRR repeat units lie at residues 144–169 (LKNLKTLYISSTPIQTSRRLYVILGN), 170–193 (MHKLTSLTISNSNLTGLIPKSFHS), 195–216 (LRYIDLSNNSLKGSIRISITRL), 217–240 (KNLKSLNLSHNSLSGQIPNKIKSL), 242–264 (FLKNLSLASNKLSGTIPNSLSSI), 265–287 (SELTHLDLSMNQLNGTVPSFFSE), and 288–313 (MKNLKHLNLADNSFHGVLPFNESFIK). Asn-182, Asn-202, Asn-223, Asn-245, Asn-278, Asn-308, and Asn-329 each carry an N-linked (GlcNAc...) asparagine glycan. A disordered region spans residues 355 to 389 (PSQKEESLSGENDYDVEGGNEEKTENLKTKEEEEE). The segment covering 374–389 (NEEKTENLKTKEEEEE) has biased composition (basic and acidic residues). Residue Asn-395 is glycosylated (N-linked (GlcNAc...) asparagine). Residues 398–418 (LFGLGIGLFSLVFLILFLFYL) traverse the membrane as a helical segment. At 419–425 (AKRCRLI) the chain is on the cytoplasmic side.

The protein belongs to the RLP family.

It localises to the cell membrane. Functionally, involved in plant defense. The sequence is that of Receptor-like protein 55 from Arabidopsis thaliana (Mouse-ear cress).